Here is a 513-residue protein sequence, read N- to C-terminus: Probable DNA ligase (513 aa).

E213 serves as a coordination point for ATP. The active-site N6-AMP-lysine intermediate is the K215. ATP is bound by residues R220, R235, E264, F304, R376, and K382.

The protein belongs to the ATP-dependent DNA ligase family. Requires Mg(2+) as cofactor.

It catalyses the reaction ATP + (deoxyribonucleotide)n-3'-hydroxyl + 5'-phospho-(deoxyribonucleotide)m = (deoxyribonucleotide)n+m + AMP + diphosphate.. In terms of biological role, DNA ligase that seals nicks in double-stranded DNA during DNA replication, DNA recombination and DNA repair. This Anaeromyxobacter sp. (strain K) protein is Probable DNA ligase.